A 284-amino-acid polypeptide reads, in one-letter code: Formamidopyrimidine-DNA glycosylase (284 aa).

Pro-2 (schiff-base intermediate with DNA) is an active-site residue. The Proton donor role is filled by Glu-3. The Proton donor; for beta-elimination activity role is filled by Lys-59. 2 residues coordinate DNA: His-94 and Arg-113. The FPG-type zinc-finger motif lies at 239–273 (KVHTKKDQPCSVCNQLIVKKKINGRGSYFCLNCQK). Arg-263 acts as the Proton donor; for delta-elimination activity in catalysis.

The protein belongs to the FPG family. As to quaternary structure, monomer. The cofactor is Zn(2+).

It catalyses the reaction Hydrolysis of DNA containing ring-opened 7-methylguanine residues, releasing 2,6-diamino-4-hydroxy-5-(N-methyl)formamidopyrimidine.. The catalysed reaction is 2'-deoxyribonucleotide-(2'-deoxyribose 5'-phosphate)-2'-deoxyribonucleotide-DNA = a 3'-end 2'-deoxyribonucleotide-(2,3-dehydro-2,3-deoxyribose 5'-phosphate)-DNA + a 5'-end 5'-phospho-2'-deoxyribonucleoside-DNA + H(+). In terms of biological role, involved in base excision repair of DNA damaged by oxidation or by mutagenic agents. Acts as a DNA glycosylase that recognizes and removes damaged bases. Has a preference for oxidized purines, such as 7,8-dihydro-8-oxoguanine (8-oxoG). Has AP (apurinic/apyrimidinic) lyase activity and introduces nicks in the DNA strand. Cleaves the DNA backbone by beta-delta elimination to generate a single-strand break at the site of the removed base with both 3'- and 5'-phosphates. The polypeptide is Formamidopyrimidine-DNA glycosylase (mutM) (Mycoplasma genitalium (strain ATCC 33530 / DSM 19775 / NCTC 10195 / G37) (Mycoplasmoides genitalium)).